A 119-amino-acid chain; its full sequence is Large ribosomal subunit protein uL18 (119 aa).

This sequence belongs to the universal ribosomal protein uL18 family. As to quaternary structure, part of the 50S ribosomal subunit; part of the 5S rRNA/L5/L18/L25 subcomplex. Contacts the 5S and 23S rRNAs.

This is one of the proteins that bind and probably mediate the attachment of the 5S RNA into the large ribosomal subunit, where it forms part of the central protuberance. The sequence is that of Large ribosomal subunit protein uL18 from Ruegeria pomeroyi (strain ATCC 700808 / DSM 15171 / DSS-3) (Silicibacter pomeroyi).